The primary structure comprises 165 residues: 3-isopropylmalate dehydratase small subunit (165 aa).

This sequence belongs to the LeuD family. LeuD type 2 subfamily. Heterodimer of LeuC and LeuD.

The enzyme catalyses (2R,3S)-3-isopropylmalate = (2S)-2-isopropylmalate. It functions in the pathway amino-acid biosynthesis; L-leucine biosynthesis; L-leucine from 3-methyl-2-oxobutanoate: step 2/4. Functionally, catalyzes the isomerization between 2-isopropylmalate and 3-isopropylmalate, via the formation of 2-isopropylmaleate. This Saccharolobus islandicus (strain Y.G.57.14 / Yellowstone #1) (Sulfolobus islandicus) protein is 3-isopropylmalate dehydratase small subunit.